Reading from the N-terminus, the 601-residue chain is Phosphomethylpyrimidine synthase (601 aa).

2 disordered regions span residues methionine 1–isoleucine 31 and alanine 100–glutamine 141. Residues alanine 100–lysine 112 show a composition bias toward basic and acidic residues. Residues asparagine 208, methionine 237, tyrosine 266, histidine 302, serine 322 to glycine 324, aspartate 363 to arginine 366, and glutamate 402 each bind substrate. Residue histidine 406 coordinates Zn(2+). Tyrosine 429 provides a ligand contact to substrate. Histidine 470 contacts Zn(2+). Residues cysteine 550, cysteine 553, and cysteine 558 each coordinate [4Fe-4S] cluster.

This sequence belongs to the ThiC family. The cofactor is [4Fe-4S] cluster.

The enzyme catalyses 5-amino-1-(5-phospho-beta-D-ribosyl)imidazole + S-adenosyl-L-methionine = 4-amino-2-methyl-5-(phosphooxymethyl)pyrimidine + CO + 5'-deoxyadenosine + formate + L-methionine + 3 H(+). The protein operates within cofactor biosynthesis; thiamine diphosphate biosynthesis. Its function is as follows. Catalyzes the synthesis of the hydroxymethylpyrimidine phosphate (HMP-P) moiety of thiamine from aminoimidazole ribotide (AIR) in a radical S-adenosyl-L-methionine (SAM)-dependent reaction. The protein is Phosphomethylpyrimidine synthase of Streptomyces avermitilis (strain ATCC 31267 / DSM 46492 / JCM 5070 / NBRC 14893 / NCIMB 12804 / NRRL 8165 / MA-4680).